A 763-amino-acid polypeptide reads, in one-letter code: F-box protein SKP2 (763 aa).

Positions 54-100 (KSSLMCLPTKVLLLILRTLDFNTLVTLCQVNSRFYNLITNEFLFQNV) constitute an F-box domain. Thr594 is subject to Phosphothreonine.

Interacts with SKP1. Component of the probable SCF(SKP2) complex containing CDC53, SKP1, RBX1 and SKP2. May interact with ribosomes.

The protein resides in the cytoplasm. It participates in protein modification; protein ubiquitination. Functionally, substrate recognition component of a SCF (SKP1-CUL1-F-box protein) E3 ubiquitin-protein ligase complex which mediates the ubiquitination and subsequent proteasomal degradation of target proteins. Probably recognizes and binds to phosphorylated target proteins. Regulates protein levels of sulfur metabolism enzymes. The SCF(SKP2) complex may regulate some transcription factors or regulators of cysteine and methionine biosynthesis. This is F-box protein SKP2 (SKP2) from Saccharomyces cerevisiae (strain ATCC 204508 / S288c) (Baker's yeast).